The following is a 360-amino-acid chain: Peptide chain release factor 1 (360 aa).

Residue Q235 is modified to N5-methylglutamine.

Belongs to the prokaryotic/mitochondrial release factor family. Post-translationally, methylated by PrmC. Methylation increases the termination efficiency of RF1.

The protein localises to the cytoplasm. In terms of biological role, peptide chain release factor 1 directs the termination of translation in response to the peptide chain termination codons UAG and UAA. This chain is Peptide chain release factor 1, found in Blochmanniella pennsylvanica (strain BPEN).